We begin with the raw amino-acid sequence, 87 residues long: Small ribosomal subunit protein uS15c (87 aa).

The protein belongs to the universal ribosomal protein uS15 family. Part of the 30S ribosomal subunit.

The protein localises to the plastid. It is found in the chloroplast. The sequence is that of Small ribosomal subunit protein uS15c (rps15) from Illicium oligandrum (Star anise).